The primary structure comprises 242 residues: ATP synthase subunit a (242 aa).

The next 6 helical transmembrane spans lie at Ser29 to Ser49, Phe84 to Ile104, Ile114 to Val134, Phe140 to Ile160, Val189 to Met209, and Val210 to Leu230.

It belongs to the ATPase A chain family. In terms of assembly, F-type ATPases have 2 components, CF(1) - the catalytic core - and CF(0) - the membrane proton channel. CF(1) has five subunits: alpha(3), beta(3), gamma(1), delta(1), epsilon(1). CF(0) has three main subunits: a(1), b(2) and c(9-12). The alpha and beta chains form an alternating ring which encloses part of the gamma chain. CF(1) is attached to CF(0) by a central stalk formed by the gamma and epsilon chains, while a peripheral stalk is formed by the delta and b chains.

The protein resides in the cell inner membrane. Key component of the proton channel; it plays a direct role in the translocation of protons across the membrane. The sequence is that of ATP synthase subunit a from Rickettsia bellii (strain OSU 85-389).